A 757-amino-acid chain; its full sequence is Catalase-peroxidase (757 aa).

The tryptophyl-tyrosyl-methioninium (Trp-Tyr) (with M-274) cross-link spans 101–248 (WHSAGTYRIG…LAAVQMGLIY (148 aa)). The active-site Proton acceptor is histidine 102. The interval 210–231 (SEGVHHPDEHSGAKEKASKNSD) is disordered. Over residues 212 to 231 (GVHHPDEHSGAKEKASKNSD) the composition is skewed to basic and acidic residues. Positions 248 to 274 (YVNPEGPDGRPDPLASARDIRETFARM) form a cross-link, tryptophyl-tyrosyl-methioninium (Tyr-Met) (with W-101). Histidine 289 contributes to the heme b binding site. The segment at 293–312 (KTHGAAPADNVGPEPEAGEL) is disordered.

This sequence belongs to the peroxidase family. Peroxidase/catalase subfamily. As to quaternary structure, homodimer or homotetramer. Requires heme b as cofactor. Formation of the three residue Trp-Tyr-Met cross-link is important for the catalase, but not the peroxidase activity of the enzyme.

The enzyme catalyses H2O2 + AH2 = A + 2 H2O. The catalysed reaction is 2 H2O2 = O2 + 2 H2O. Functionally, bifunctional enzyme with both catalase and broad-spectrum peroxidase activity. The protein is Catalase-peroxidase of Xylella fastidiosa (strain M12).